The primary structure comprises 469 residues: Glutamate--tRNA ligase (469 aa).

The 'HIGH' region signature appears at 9–19 (PSPTGFLHVGG). Cys98, Cys100, Cys125, and Asp127 together coordinate Zn(2+). Residues 236–240 (KLSKR) carry the 'KMSKS' region motif. ATP is bound at residue Lys239.

It belongs to the class-I aminoacyl-tRNA synthetase family. Glutamate--tRNA ligase type 1 subfamily. Monomer. Zn(2+) is required as a cofactor.

The protein localises to the cytoplasm. The catalysed reaction is tRNA(Glu) + L-glutamate + ATP = L-glutamyl-tRNA(Glu) + AMP + diphosphate. Catalyzes the attachment of glutamate to tRNA(Glu) in a two-step reaction: glutamate is first activated by ATP to form Glu-AMP and then transferred to the acceptor end of tRNA(Glu). This is Glutamate--tRNA ligase from Shewanella sp. (strain W3-18-1).